The sequence spans 303 residues: MKITASMVSELRTKTGAGMMDCKKALSEADGNIEEAVDILRKKGLSAAAKKADRAAAEGLVVGLNEGSCGVLVEVNAETDFVAKNANFQEFTNGVAKVVVSSKPADLEALKALPFPGTDRTVAEEQTHQIATIGENINLRRFVCFDVAQGAVAVYIHGVGKIGVLVELETSKGDDERVAALGRNLAMHIAAANPQYLNRDEVSAEVVEKEKEIMRTKALESGKPEKIVEKIIAGQINKYFGEVCLLEQAYVIDPDLTVTKVVENLGKEIGAEVTLSRYVRFQLGEGLEKRSDDFAAEVASMTK.

Positions 79 to 82 (TDFV) are involved in Mg(2+) ion dislocation from EF-Tu.

It belongs to the EF-Ts family.

The protein resides in the cytoplasm. Associates with the EF-Tu.GDP complex and induces the exchange of GDP to GTP. It remains bound to the aminoacyl-tRNA.EF-Tu.GTP complex up to the GTP hydrolysis stage on the ribosome. The chain is Elongation factor Ts from Syntrophotalea carbinolica (strain DSM 2380 / NBRC 103641 / GraBd1) (Pelobacter carbinolicus).